A 257-amino-acid chain; its full sequence is Imidazole glycerol phosphate synthase subunit HisF (257 aa).

Catalysis depends on residues D12 and D131.

This sequence belongs to the HisA/HisF family. In terms of assembly, heterodimer of HisH and HisF.

It localises to the cytoplasm. The enzyme catalyses 5-[(5-phospho-1-deoxy-D-ribulos-1-ylimino)methylamino]-1-(5-phospho-beta-D-ribosyl)imidazole-4-carboxamide + L-glutamine = D-erythro-1-(imidazol-4-yl)glycerol 3-phosphate + 5-amino-1-(5-phospho-beta-D-ribosyl)imidazole-4-carboxamide + L-glutamate + H(+). Its pathway is amino-acid biosynthesis; L-histidine biosynthesis; L-histidine from 5-phospho-alpha-D-ribose 1-diphosphate: step 5/9. IGPS catalyzes the conversion of PRFAR and glutamine to IGP, AICAR and glutamate. The HisF subunit catalyzes the cyclization activity that produces IGP and AICAR from PRFAR using the ammonia provided by the HisH subunit. In Kineococcus radiotolerans (strain ATCC BAA-149 / DSM 14245 / SRS30216), this protein is Imidazole glycerol phosphate synthase subunit HisF.